We begin with the raw amino-acid sequence, 102 residues long: Small ribosomal subunit protein uS10 (102 aa).

Belongs to the universal ribosomal protein uS10 family. As to quaternary structure, part of the 30S ribosomal subunit.

Its function is as follows. Involved in the binding of tRNA to the ribosomes. This chain is Small ribosomal subunit protein uS10, found in Streptococcus pneumoniae (strain Taiwan19F-14).